Reading from the N-terminus, the 130-residue chain is Small ribosomal subunit protein uS9 (130 aa).

It belongs to the universal ribosomal protein uS9 family. Part of the 30S ribosomal subunit.

The protein is Small ribosomal subunit protein uS9 (rpsI) of Bacillus subtilis (strain 168).